Consider the following 389-residue polypeptide: MSCFLGPSTNNKSRENEGSSMAAPYEQQNLPRNDRRQITTWEAVGTNKESPKNIKAKSFKFRELATATNSFRQEFLIGEGGFGRVYKGKMEKTGQVVAVKQLDRNGLQGNREFLVEIFRLSLLHHPNLANLIGYCLDGDQRLLVHEFMPLGSLEDHLLDVVVGQQPLDWNSRIRIALGAAKGLEYLHEKANPPVIYRDFKSSNILLNVDFDAKLSDFGLAKLGSVGDTQNVSSRVVGTYGYCAPEYHKTGQLTVKSDVYSFGVVLLELITGKRVIDTTRPCHEQNLVTWAQPIFREPNRFPELADPLLQGEFPEKSLNQAVAIAAMCLQEEPIVRPLISDVVTALSFMSTETGSPSGLTGTALNPLSPKTVEDQGWLQCESPRDVYSLL.

Residues 1-36 form a disordered region; the sequence is MSCFLGPSTNNKSRENEGSSMAAPYEQQNLPRNDRR. The S-palmitoyl cysteine moiety is linked to residue cysteine 3. Positions 71 to 348 constitute a Protein kinase domain; that stretch reads FRQEFLIGEG…SDVVTALSFM (278 aa). ATP-binding positions include 77–85 and lysine 100; that span reads IGEGGFGRV. The active-site Proton acceptor is the aspartate 198. A phosphoserine mark is found at serine 202 and serine 232. Threonine 238 is modified (phosphothreonine). Tyrosine 246 bears the Phosphotyrosine mark.

Belongs to the protein kinase superfamily. Ser/Thr protein kinase family.

The protein localises to the cell membrane. It carries out the reaction L-seryl-[protein] + ATP = O-phospho-L-seryl-[protein] + ADP + H(+). The enzyme catalyses L-threonyl-[protein] + ATP = O-phospho-L-threonyl-[protein] + ADP + H(+). Its function is as follows. May be involved in plant defense signaling. The polypeptide is Probable serine/threonine-protein kinase PBL24 (Arabidopsis thaliana (Mouse-ear cress)).